A 146-amino-acid polypeptide reads, in one-letter code: Deoxyuridine 5'-triphosphate nucleotidohydrolase (146 aa).

Substrate-binding positions include 60–62 (RSG), N73, and 77–79 (VID).

Belongs to the dUTPase family. The cofactor is Mg(2+).

The catalysed reaction is dUTP + H2O = dUMP + diphosphate + H(+). It participates in pyrimidine metabolism; dUMP biosynthesis; dUMP from dCTP (dUTP route): step 2/2. This enzyme is involved in nucleotide metabolism: it produces dUMP, the immediate precursor of thymidine nucleotides and it decreases the intracellular concentration of dUTP so that uracil cannot be incorporated into DNA. This Tropheryma whipplei (strain TW08/27) (Whipple's bacillus) protein is Deoxyuridine 5'-triphosphate nucleotidohydrolase.